We begin with the raw amino-acid sequence, 799 residues long: Protein phosphatase 1 regulatory subunit 3F (799 aa).

The tract at residues 1 to 30 (MARTAPVEPPLRHPAPPSPAAGEPRASAEA) is disordered. At 1–772 (MARTAPVEPP…LTQTLGVLAG (772 aa)) the chain is on the cytoplasmic side. The segment covering 7–19 (VEPPLRHPAPPSP) has biased composition (pro residues). Residue Ser18 is modified to Phosphoserine. Over residues 20 to 30 (AAGEPRASAEA) the composition is skewed to low complexity. The PP1-binding motif motif lies at 36 to 39 (RVLF). Disordered regions lie at residues 53 to 108 (RYRP…PVPA), 201 to 235 (SPPGAGVGGTGAGDPLLDPGLGLGPGQMSASSPDD), 332 to 353 (RRRPFEEEPRMRSADDNTLAEH), and 417 to 439 (ATCGLGGPPRDQASGPDASDRAA). The span at 78–97 (ADEEDDGEDGDEGEEEEEAF) shows a compositional bias: acidic residues. Residues 127–283 (LERLGRVMVE…NNHGRNYTVL (157 aa)) form the CBM21 domain. The segment covering 334–353 (RPFEEEPRMRSADDNTLAEH) has biased composition (basic and acidic residues). Ser545 carries the phosphoserine modification. Disordered regions lie at residues 566–600 (KDTEDPDDEGEGEDGLSITPSSPEGGSPKESPPEI), 663–688 (SKSPGEAGTESQMEELPTERESSWVP), and 722–743 (PHVNSQEEEGGSLNLESPKRSP). The span at 569 to 579 (EDPDDEGEGED) shows a compositional bias: acidic residues. The segment covering 585-594 (PSSPEGGSPK) has biased composition (low complexity). Phosphoserine is present on residues Ser587 and Ser592. Basic and acidic residues predominate over residues 679–688 (PTERESSWVP). A helical membrane pass occupies residues 773–793 (LVMVPVALNSGVSLLVLVLCL). Over 794-799 (SLAWFS) the chain is Extracellular.

Highly expressed in brain (at protein level).

The protein localises to the membrane. Functionally, glycogen-targeting subunit for protein phosphatase 1 (PP1). This Mus musculus (Mouse) protein is Protein phosphatase 1 regulatory subunit 3F (Ppp1r3f).